Consider the following 192-residue polypeptide: Protein A16 (192 aa).

Positions 1 to 22 are cleaved as a signal peptide; it reads MLLANTAAAVLLLIVCIGASVG. In terms of domain architecture, C-type lectin spans 71–186; that stretch reads KNKKFTIGTL…CLNPLNIFPY (116 aa). A disulfide bridge links Cys163 with Cys177.

Expressed in the gut of adults.

The protein is Protein A16 (CTL3) of Anopheles gambiae (African malaria mosquito).